The following is a 299-amino-acid chain: Leucine zipper transcription factor-like protein 1 (299 aa).

Residues 88–296 (LAQAEKWYLK…DLRKRLAQYE (209 aa)) are a coiled coil. The tract at residues 145-299 (GTAELLNKEI…KRLAQYEPED (155 aa)) is interaction with BSS9.

Belongs to the LZTFL1 family. In terms of assembly, self-associates. Interacts with BBS9; the interaction mediates the association of LZTL1 with the BBsome complex and regulates BBSome ciliary trafficking.

It is found in the cytoplasm. Regulates ciliary localization of the BBSome complex. Together with the BBSome complex, controls SMO ciliary trafficking and contributes to the sonic hedgehog (SHH) pathway regulation. May play a role in neurite outgrowth. May have tumor suppressor function. The polypeptide is Leucine zipper transcription factor-like protein 1 (LZTFL1) (Macaca fascicularis (Crab-eating macaque)).